The chain runs to 368 residues: Interferon-stimulated 20 kDa exonuclease-like 2 (368 aa).

Disordered regions lie at residues Phe33–Lys107 and Pro127–Pro187. The span at Lys42–Asn54 shows a compositional bias: polar residues. Residues Lys77–Ala96 are compositionally biased toward basic and acidic residues. The span at Ser131 to Lys145 shows a compositional bias: basic residues. The 175-residue stretch at Met194–Asn368 folds into the Exonuclease domain.

It localises to the nucleus. Its subcellular location is the nucleolus. In terms of biological role, 3'-&gt; 5'-exoribonuclease involved in ribosome biogenesis in the processing of the 12S pre-rRNA. Displays a strong specificity for a 3'-end containing a free hydroxyl group. This chain is Interferon-stimulated 20 kDa exonuclease-like 2 (Isg20l2), found in Mus musculus (Mouse).